Consider the following 415-residue polypeptide: Amylovoran biosynthesis protein AmsJ (415 aa).

It belongs to the polysaccharide pyruvyl transferase family.

It functions in the pathway glycan metabolism; exopolysaccharide biosynthesis. Its function is as follows. Involved in the biosynthesis of amylovoran which functions as a virulence factor. This is Amylovoran biosynthesis protein AmsJ (amsJ) from Erwinia amylovora (Fire blight bacteria).